The chain runs to 105 residues: U2-lycotoxin-Ls1b (105 aa).

Residues 1-17 form the signal peptide; sequence MIKYVLISALLVVAVYS. Positions 18–41 are excised as a propeptide; it reads FTIEDNEDALLEEAEDELDTEEER. Intrachain disulfides connect cysteine 51/cysteine 67, cysteine 58/cysteine 97, cysteine 60/cysteine 83, and cysteine 69/cysteine 81.

This sequence belongs to the neurotoxin 04 (omega-agtx) family. 01 (type I omega-agtx) subfamily. In terms of tissue distribution, expressed by the venom gland.

It localises to the secreted. Its function is as follows. Insecticidal to house crickets. It induces an excitatory slow-onset impact that leads to irreversible spastic paralysis. It also modifies human voltage-gated potassium channel Kv1.5/KCNA5. Most likely, it binds to the voltage-sensing domain of the channel, suggesting it does not block the pore but prevents its opening at physiological membrane potentials. The recombinant peptide binds to the channel in an irreversible manner and slows down the hKv1.5 current activation kinetics. It is not toxic to mice, when intracranially injected (at 0.5 ug/g mouse). The protein is U2-lycotoxin-Ls1b of Lycosa singoriensis (Wolf spider).